We begin with the raw amino-acid sequence, 401 residues long: Dual specificity mitogen-activated protein kinase kinase 2 (401 aa).

Met1 bears the N-acetylmethionine mark. The residue at position 23 (Ser23) is a Phosphoserine. The region spanning Phe72–Ile370 is the Protein kinase domain. Residues Leu78–Val86 and Lys101 contribute to the ATP site. Residue Asp194 is the Proton acceptor of the active site. A phosphoserine; by RAF mark is found at Ser222 and Ser226. The tract at residues Pro282 to Gly310 is disordered. Residues Ser293, Ser295, and Ser306 each carry the phosphoserine modification. Residues Thr395 and Thr397 each carry the phosphothreonine modification.

The protein belongs to the protein kinase superfamily. STE Ser/Thr protein kinase family. MAP kinase kinase subfamily. Interacts with MORG1. Interacts with SGK1. Interacts with KSR1. Interacts with KSR1 and BRAF; the interaction with KSR1 mediates KSR1-BRAF dimerization. Interacts with GLS. Mg(2+) serves as cofactor. In terms of processing, phosphorylation on Ser/Thr by MAP kinase kinase kinases (RAF or MEKK1) positively regulates the kinase activity. Phosphorylated by MAP2K1/MEK1. Low levels of autophosphorylation have been observed. As to expression, expressed in adult intestine, kidney, liver, lung, pancreas, spleen, thymus, and at high levels in the neonatal brain. Lower expression is found in adult brain and heart.

The protein resides in the cytoplasm. It is found in the membrane. It carries out the reaction L-seryl-[protein] + ATP = O-phospho-L-seryl-[protein] + ADP + H(+). The enzyme catalyses L-threonyl-[protein] + ATP = O-phospho-L-threonyl-[protein] + ADP + H(+). It catalyses the reaction L-tyrosyl-[protein] + ATP = O-phospho-L-tyrosyl-[protein] + ADP + H(+). With respect to regulation, inhibited by serine/threonine phosphatase 2A. Its function is as follows. Catalyzes the concomitant phosphorylation of a threonine and a tyrosine residue in a Thr-Glu-Tyr sequence located in MAP kinases. Activates the ERK1 and ERK2 MAP kinases. Activates BRAF in a KSR1 or KSR2-dependent manner; by binding to KSR1 or KSR2 releases the inhibitory intramolecular interaction between KSR1 or KSR2 protein kinase and N-terminal domains which promotes KSR1 or KSR2-BRAF dimerization and BRAF activation. This is Dual specificity mitogen-activated protein kinase kinase 2 (Map2k2) from Mus musculus (Mouse).